Here is a 175-residue protein sequence, read N- to C-terminus: Nucleoside diphosphate kinase 6 (175 aa).

6 residues coordinate ATP: Lys8, Phe57, Arg85, Thr91, Arg105, and Asn115. The active-site Pros-phosphohistidine intermediate is the His118.

Belongs to the NDK family. It depends on Mg(2+) as a cofactor.

The enzyme catalyses a 2'-deoxyribonucleoside 5'-diphosphate + ATP = a 2'-deoxyribonucleoside 5'-triphosphate + ADP. The catalysed reaction is a ribonucleoside 5'-diphosphate + ATP = a ribonucleoside 5'-triphosphate + ADP. Functionally, major role in the synthesis of nucleoside triphosphates other than ATP. The ATP gamma phosphate is transferred to the NDP beta phosphate via a ping-pong mechanism, using a phosphorylated active-site intermediate. This chain is Nucleoside diphosphate kinase 6 (Nme6), found in Rattus norvegicus (Rat).